Reading from the N-terminus, the 1121-residue chain is Brassinosteroid LRR receptor kinase BRI1 (1121 aa).

A signal peptide spans 1–24 (MDSLWAAIAALFVAAAVVVRGAAA). The Cys pair 1 signature appears at 54–61 (CRFPGAGC). LRR repeat units lie at residues 90–114 (LGSV…GGAR), 116–142 (GSKL…ALAS), 144–167 (CGGL…GGGG), 170–193 (FAGL…RWMV), 197–221 (VGAV…NCSG), 223–243 (QYLD…ALSD), 244–268 (CRGL…IAGL), 269–292 (TSLN…AFAK), 294–317 (QQLT…VASL), 318–341 (PELQ…LCQD), 343–367 (NSKL…VSNC), 369–391 (SLVS…LGDL), 392–415 (GNLQ…LSRI), 416–439 (QGLE…LAKC), 441–463 (KLNW…LGKL), 464–487 (SYLA…LGDC), and 489–511 (SLVW…LAKQ). Asn102 carries an N-linked (GlcNAc...) asparagine glycan. N-linked (GlcNAc...) asparagine glycosylation is present at Asn151. A glycan (N-linked (GlcNAc...) asparagine) is linked at Asn218. N-linked (GlcNAc...) asparagine glycans are attached at residues Asn251, Asn275, Asn280, and Asn307. N-linked (GlcNAc...) asparagine glycans are attached at residues Asn366 and Asn381. N-linked (GlcNAc...) asparagine glycosylation is found at Asn473 and Asn501. Tyr525 contributes to the brassinolide binding site. One copy of the LRR 18 repeat lies at 541–564 (GSLLEFTSIRPDDLSRMPSKKLCN). Residue Asn564 is glycosylated (N-linked (GlcNAc...) asparagine). Brassinolide is bound at residue Tyr569. An N-linked (GlcNAc...) asparagine glycan is attached at Asn580. LRR repeat units lie at residues 580 to 603 (NGSM…ELGD), 604 to 628 (MFYL…LAEA), 629 to 651 (KKLA…SFSA), and 652 to 676 (LSLS…SLAT). N-linked (GlcNAc...) asparagine glycans are attached at residues Asn658, Asn665, and Asn684. A Cys pair 2 motif is present at residues 689–696 (CGFPLPPC). The tract at residues 693–712 (LPPCDHSSPRSSNDHQSHRR) is disordered. A helical transmembrane segment spans residues 719 to 739 (SIAMGLLFSLFCIIVIIIAIG). Residues 807 to 1083 (FHIACQIGSG…LKVMAMFKEI (277 aa)) form the Protein kinase domain. ATP-binding positions include 813 to 821 (IGSGGFGDV), Lys835, 881 to 883 (DYM), 887 to 890 (SLED), 933 to 938 (DMKSSN), and Asp951. The active-site Proton acceptor is Asp933.

The protein belongs to the protein kinase superfamily. Ser/Thr protein kinase family. Interacts with BIP103 and BIP131. Interacts with BAK1. Interacts with BSK3. Interacts with SERK2. As to expression, highly expressed in shoots. Expressed at low levels in roots.

The protein localises to the cell membrane. The enzyme catalyses L-seryl-[protein] + ATP = O-phospho-L-seryl-[protein] + ADP + H(+). The catalysed reaction is L-threonyl-[protein] + ATP = O-phospho-L-threonyl-[protein] + ADP + H(+). In terms of biological role, receptor kinase involved brassinosteroid (BR) signal transduction. Regulates, in response to BR binding, a signaling cascade involved in plant development, promotion of cell elongation and flowering. Activates BR signaling by targeting and phosphorylating BSK3, a positive regulator of BR signaling. Forms at the plasma membrane a receptor complex with BAK1 which is activated in response to brassinolide. Phosphorylates BAK1. Phosphorylates REM4.1, which reduces REM4.1 binding affinity to BAK1 and allows the formation and subsequent activation of the BRI1-BAK1 receptor complex. Functions in various growth and developmental processes, such as internode elongation, bending of the lamina joint and skotomorphogenesis. Functions in internode elongation by inducing the formation of the intercalary meristem and the longitudinal elongation of internode cells. Involved in organ development through the control of cell division and elongation. Does not seem essential for organ pattern formation or organ initiation. The polypeptide is Brassinosteroid LRR receptor kinase BRI1 (Oryza sativa subsp. japonica (Rice)).